A 744-amino-acid chain; its full sequence is Collagen alpha-1(VIII) chain (744 aa).

A signal peptide spans 1 to 27; it reads MAVLPGPLQLLGVLLTISLSSIRLIQA. The nonhelical region (NC2) stretch occupies residues 29–117; the sequence is AYYGIKPLPP…GKEIPLASLR (89 aa). Disordered regions lie at residues 115–393 and 459–589; these read SLRG…GEPG and GPKG…PDMG. The triple-helical region (COL1) stretch occupies residues 118–571; it reads GEQGPRGEPG…PGPPGPPGPP (454 aa). Pro residues predominate over residues 128–137; sequence PRGPPGPPGL. The span at 168–178 shows a compositional bias: low complexity; it reads KPGAMGMPGAK. 2 stretches are compositionally biased toward gly residues: residues 203 to 217 and 328 to 337; these read GLPG…GLPG and GFPGGKGEQG. Composition is skewed to low complexity over residues 466–496 and 538–556; these read QKGV…LQGP and AGLH…QGQP. A compositionally biased stretch (pro residues) spans 558 to 581; it reads LPGPPGPPGPPGPPAVMPPTPPPQ. The segment at 572-744 is nonhelical region (NC1); that stretch reads AVMPPTPPPQ…SFSGYLLYPM (173 aa). One can recognise a C1q domain in the interval 611 to 744; sequence PAYEMPAFTA…SFSGYLLYPM (134 aa).

Homotrimers, or heterotrimers in association with alpha 2(VIII) type collagens. Four homotrimers can form a tetrahedron stabilized by central interacting C-terminal NC1 trimers. Prolines at the third position of the tripeptide repeating unit (G-X-Y) are hydroxylated in some or all of the chains. In terms of processing, proteolytically cleaved by neutrophil elastase, in vitro. Proteolytic processing produces the C-terminal NC1 domain fragment, vastatin. Expressed primarily in the subendothelium of large blood vessels. Also expressed in arterioles and venules in muscle, heart, kidney, spleen, umbilical cord, liver and lung and is also found in connective tissue layers around hair follicles, around nerve bundles in muscle, in the dura of the optic nerve, in cornea and sclera, and in the perichondrium of cartilaginous tissues. In the kidney, expressed in mesangial cells, glomerular endothelial cells, and tubular epithelial cells. Also expressed in mast cells, and in astrocytes during the repair process. Expressed in Descemet's membrane. Specifically expressed in peritoneal fibroblasts and mesothelial cells.

It localises to the secreted. It is found in the extracellular space. Its subcellular location is the extracellular matrix. The protein localises to the basement membrane. Macromolecular component of the subendothelium. Major component of the Descemet's membrane (basement membrane) of corneal endothelial cells. Also a component of the endothelia of blood vessels. Necessary for migration and proliferation of vascular smooth muscle cells and thus, has a potential role in the maintenance of vessel wall integrity and structure, in particular in atherogenesis. Functionally, vastatin, the C-terminal fragment comprising the NC1 domain, inhibits aortic endothelial cell proliferation and causes cell apoptosis. This Homo sapiens (Human) protein is Collagen alpha-1(VIII) chain (COL8A1).